Here is a 248-residue protein sequence, read N- to C-terminus: Leucyl/phenylalanyl-tRNA--protein transferase (248 aa).

It belongs to the L/F-transferase family.

It localises to the cytoplasm. It catalyses the reaction N-terminal L-lysyl-[protein] + L-leucyl-tRNA(Leu) = N-terminal L-leucyl-L-lysyl-[protein] + tRNA(Leu) + H(+). The enzyme catalyses N-terminal L-arginyl-[protein] + L-leucyl-tRNA(Leu) = N-terminal L-leucyl-L-arginyl-[protein] + tRNA(Leu) + H(+). It carries out the reaction L-phenylalanyl-tRNA(Phe) + an N-terminal L-alpha-aminoacyl-[protein] = an N-terminal L-phenylalanyl-L-alpha-aminoacyl-[protein] + tRNA(Phe). Its function is as follows. Functions in the N-end rule pathway of protein degradation where it conjugates Leu, Phe and, less efficiently, Met from aminoacyl-tRNAs to the N-termini of proteins containing an N-terminal arginine or lysine. This is Leucyl/phenylalanyl-tRNA--protein transferase from Ralstonia pickettii (strain 12J).